The primary structure comprises 482 residues: 23S rRNA (uracil(1939)-C(5))-methyltransferase RlmD (482 aa).

Positions 1–33 (MANLFKQSRAKQKNKTTPSQTQTSTKGSARANA) are disordered. A compositionally biased stretch (low complexity) spans 15 to 28 (KTTPSQTQTSTKGS). One can recognise a TRAM domain in the interval 51-108 (TAQDANNNAITIQELDWMGQGVARGATMYFVEGALPGETCDIEVVSSKKKVVSAKTIS). The [4Fe-4S] cluster site is built by Cys-121, Cys-127, Cys-130, and Cys-208. Residues Gln-313, Phe-342, Asn-347, Glu-363, Asp-390, and Asp-411 each coordinate S-adenosyl-L-methionine. The Nucleophile role is filled by Cys-437.

It belongs to the class I-like SAM-binding methyltransferase superfamily. RNA M5U methyltransferase family. RlmD subfamily.

It carries out the reaction uridine(1939) in 23S rRNA + S-adenosyl-L-methionine = 5-methyluridine(1939) in 23S rRNA + S-adenosyl-L-homocysteine + H(+). Catalyzes the formation of 5-methyl-uridine at position 1939 (m5U1939) in 23S rRNA. The polypeptide is 23S rRNA (uracil(1939)-C(5))-methyltransferase RlmD (Alteromonas mediterranea (strain DSM 17117 / CIP 110805 / LMG 28347 / Deep ecotype)).